The chain runs to 807 residues: MSGWQRIYYKLLNLPLRVLVKSKSIPAEPAQELGLDTSRPVMYVLPYNSKADLLTLRAQCLAHDLPDPLEPLEIDGALLPRYVFIHGGPRVFTYYTPKEESIKLFHDYLDLHRNHPDLDVQMVPVSVMFGRSPGREKGEVNPPLRMLNGIQKFFAVSWLGRDSFVRFSPSVSLRRMADEHGTDKIIAQKLARVARMHFARQRLAAVGPRLPARQDLFNKLLASKAIARAVEDEARSKKISHEKAQQNAIALMEEIAANFSYEMIRLTDRILGFTWNRLYQGINVHNAERVRQLAHDGHEIVYVPCHRSHMDYLLLSYVLYHQGLVPPHIAAGINLNFWPAGPIFRRLGAFFIRRTFKGNKLYSTVFREYLGELFSRGYSVEYFVEGGRSRTGRLLDPKTGTLSMTIQAMLRGGTRPITLVPIYIGYEHVMEVGTYAKELRGATKEKESLPQMVRGLSKLRNLGQGYVNFGEPLPLMTYLNHHVPEWREAIDPIEAIRPSWLTPTVNNIAADLMVRINNAGAANAMNLCCTALLASRQRSLTREQLTQQLECYLALLRNVPYSPDATTPSASASELIDHALQMNKFEVEKDTIGDIIILPREQAVLMTYYRNNIAHMLVIPSLLAALVTQHRQLSRTEVLRHVETLYPFLKAELFLRWEKAELAGVVDALIAEMLRQELIVVDGEVMSLNPSHSRSLQLLAAGARETLQRYAITFWLLSANPSINRSSLEKESRTVAQRLSVLHGINAPEFFDKAVFSTLVLTLRDEGYISDTGDAEPEETLKVYRMLADLITSDVRLTIESVTQDDA.

An HXXXXD motif motif is present at residues 305–310 (CHRSHM).

It belongs to the GPAT/DAPAT family.

The protein localises to the cell inner membrane. It carries out the reaction sn-glycerol 3-phosphate + an acyl-CoA = a 1-acyl-sn-glycero-3-phosphate + CoA. It participates in phospholipid metabolism; CDP-diacylglycerol biosynthesis; CDP-diacylglycerol from sn-glycerol 3-phosphate: step 1/3. This is Glycerol-3-phosphate acyltransferase from Klebsiella pneumoniae (strain 342).